We begin with the raw amino-acid sequence, 102 residues long: Small ribosomal subunit protein uS10 (102 aa).

This sequence belongs to the universal ribosomal protein uS10 family. In terms of assembly, part of the 30S ribosomal subunit.

Involved in the binding of tRNA to the ribosomes. The protein is Small ribosomal subunit protein uS10 of Moorella thermoacetica (strain ATCC 39073 / JCM 9320).